The primary structure comprises 78 residues: Xibalbin-13 1 (78 aa).

Positions 1 to 27 are cleaved as a signal peptide; it reads MKEANTRRYIHLCLVVVLVSTIITTEA. A propeptide spanning residues 28–31 is cleaved from the precursor; sequence EDDR. Disulfide bonds link Cys34-Cys49, Cys41-Cys54, Cys48-Cys65, and Cys56-Cys63. Ser76 carries the post-translational modification Serine amide.

This sequence belongs to the xibalbin-13 family. In terms of tissue distribution, expressed by the venom gland.

It is found in the secreted. In terms of biological role, probable neurotoxin. Strongly inhibits voltage-gated potassium channels (Kv1.1/KCNA1, Kv1.2/KCNA2, Kv1.3/KCNA3, and Kv1.6/KCNA6) and mildly inhibits sodium channels (Nav1.2/SCN2A, Nav1.4/SCN4A, Nav1.5/SCN5A, Nav1.6/SCN8A, and BgNav). Induces activation of protein kinase A type II (PKA-II) and MAP kinase Erk1/2 in primary nociceptive and non-nociceptive sensory neurons. Does not show cytotoxic activity. Does not have an impact on Ca2+, cAMP, and NO signaling in the cell types analyzed. Does not interfere with the adhesion of leukocytes to endothelial cells. This is Xibalbin-13 1 from Xibalbanus tulumensis (Blind cave remipede).